The chain runs to 505 residues: ATP synthase subunit alpha, chloroplastic (505 aa).

Residue 170-177 (GDRQTGKT) coordinates ATP.

This sequence belongs to the ATPase alpha/beta chains family. As to quaternary structure, F-type ATPases have 2 components, CF(1) - the catalytic core - and CF(0) - the membrane proton channel. CF(1) has five subunits: alpha(3), beta(3), gamma(1), delta(1), epsilon(1). CF(0) has four main subunits: a, b, b' and c.

Its subcellular location is the plastid. It localises to the chloroplast thylakoid membrane. It carries out the reaction ATP + H2O + 4 H(+)(in) = ADP + phosphate + 5 H(+)(out). Functionally, produces ATP from ADP in the presence of a proton gradient across the membrane. The alpha chain is a regulatory subunit. This is ATP synthase subunit alpha, chloroplastic from Oenothera biennis (German evening primrose).